The primary structure comprises 225 residues: Pathogenesis-related thaumatin-like protein 3.8 (225 aa).

The first 26 residues, 1–26 (MAKVSDLALLLVAGMAISLYIQETGA), serve as a signal peptide directing secretion. Disulfide bonds link cysteine 35/cysteine 224, cysteine 76/cysteine 86, cysteine 91/cysteine 97, cysteine 139/cysteine 213, cysteine 144/cysteine 197, cysteine 152/cysteine 162, cysteine 166/cysteine 175, and cysteine 176/cysteine 184. Asparagine 188 is a glycosylation site (N-linked (GlcNAc...) asparagine).

Belongs to the thaumatin family.

In terms of biological role, may be involved in disease resistance. The protein is Pathogenesis-related thaumatin-like protein 3.8 of Cryptomeria japonica (Japanese cedar).